Consider the following 121-residue polypeptide: Large ribosomal subunit protein uL22 (121 aa).

Belongs to the universal ribosomal protein uL22 family. As to quaternary structure, part of the 50S ribosomal subunit.

In terms of biological role, this protein binds specifically to 23S rRNA; its binding is stimulated by other ribosomal proteins, e.g. L4, L17, and L20. It is important during the early stages of 50S assembly. It makes multiple contacts with different domains of the 23S rRNA in the assembled 50S subunit and ribosome. Its function is as follows. The globular domain of the protein is located near the polypeptide exit tunnel on the outside of the subunit, while an extended beta-hairpin is found that lines the wall of the exit tunnel in the center of the 70S ribosome. The sequence is that of Large ribosomal subunit protein uL22 from Micrococcus luteus (strain ATCC 4698 / DSM 20030 / JCM 1464 / CCM 169 / CCUG 5858 / IAM 1056 / NBRC 3333 / NCIMB 9278 / NCTC 2665 / VKM Ac-2230) (Micrococcus lysodeikticus).